A 388-amino-acid polypeptide reads, in one-letter code: Mannitol-1-phosphate 5-dehydrogenase (388 aa).

5–16 serves as a coordination point for NAD(+); sequence AIQFGGGNIGRG. Lys-213 is an active-site residue.

The protein belongs to the mannitol dehydrogenase family. As to quaternary structure, monomer.

It catalyses the reaction D-mannitol 1-phosphate + NAD(+) = beta-D-fructose 6-phosphate + NADH + H(+). Its function is as follows. Catalyzes the NAD(H)-dependent interconversion of D-fructose 6-phosphate and D-mannitol 1-phosphate in the mannitol metabolic pathway. The sequence is that of Mannitol-1-phosphate 5-dehydrogenase (mpdA) from Aspergillus clavatus (strain ATCC 1007 / CBS 513.65 / DSM 816 / NCTC 3887 / NRRL 1 / QM 1276 / 107).